Here is a 261-residue protein sequence, read N- to C-terminus: GTP cyclohydrolase FolE2 (261 aa).

It belongs to the GTP cyclohydrolase IV family.

The catalysed reaction is GTP + H2O = 7,8-dihydroneopterin 3'-triphosphate + formate + H(+). It functions in the pathway cofactor biosynthesis; 7,8-dihydroneopterin triphosphate biosynthesis; 7,8-dihydroneopterin triphosphate from GTP: step 1/1. Functionally, converts GTP to 7,8-dihydroneopterin triphosphate. The chain is GTP cyclohydrolase FolE2 from Geobacter metallireducens (strain ATCC 53774 / DSM 7210 / GS-15).